Here is a 311-residue protein sequence, read N- to C-terminus: Olfactory receptor 1N1 (311 aa).

Over 1-23 the chain is Extracellular; that stretch reads MENQSSISEFFLRGISAPPEQQQ. N-linked (GlcNAc...) asparagine glycosylation occurs at Asn3. A helical membrane pass occupies residues 24 to 47; it reads SLFGIFLCMYLVTLTGNLLIILAI. Topologically, residues 48–55 are cytoplasmic; sequence GSDLHLHT. A helical membrane pass occupies residues 56–77; that stretch reads PMYFFLANLSFVDMGLTSSTVT. At 78–98 the chain is on the extracellular side; the sequence is KMLVNIQTRHHTISYTGCLTQ. Residues Cys95 and Cys187 are joined by a disulfide bond. A helical membrane pass occupies residues 99–118; sequence MYFFLMFGDLDSFFLAAMAY. At 119–137 the chain is on the cytoplasmic side; sequence DRYVAICHPLCYSTVMRPQ. Residues 138 to 156 traverse the membrane as a helical segment; that stretch reads VCALMLALCWVLTNIVALT. Over 157-194 the chain is Extracellular; it reads HTFLMARLSFCVTGEIAHFFCDITPVLKLSCSDTHINE. Residues 195–217 form a helical membrane-spanning segment; it reads MMVFVLGGTVLIVPFLCIVTSYI. Residues 218–234 are Cytoplasmic-facing; the sequence is HIVPAILRVRTRGGVGK. A helical transmembrane segment spans residues 235-257; the sequence is AFSTCSSHLCVVCVFYGTLFSAY. At 258–270 the chain is on the extracellular side; it reads LCPPSIASEEKDI. A helical membrane pass occupies residues 271 to 290; sequence AAAAMYTIVTPMLNPFIYSL. Topologically, residues 291-311 are cytoplasmic; the sequence is RNKDMKGALKRLFSHRSIVSS.

It belongs to the G-protein coupled receptor 1 family.

It localises to the cell membrane. Functionally, odorant receptor. This chain is Olfactory receptor 1N1 (OR1N1), found in Homo sapiens (Human).